Reading from the N-terminus, the 144-residue chain is uncharacterized protein (144 aa).

The stretch at 23–82 forms a coiled coil; that stretch reads EELYKKLENNLRKIETSYLDSKHCQDFKRKIEYYKIVPLISETKEIIKVLIQKIETLEIK.

This is an uncharacterized protein from Acanthamoeba polyphaga mimivirus (APMV).